A 101-amino-acid chain; its full sequence is Small ribosomal subunit protein uS10 (101 aa).

It belongs to the universal ribosomal protein uS10 family. As to quaternary structure, part of the 30S ribosomal subunit.

In terms of biological role, involved in the binding of tRNA to the ribosomes. The protein is Small ribosomal subunit protein uS10 of Corynebacterium aurimucosum (strain ATCC 700975 / DSM 44827 / CIP 107346 / CN-1) (Corynebacterium nigricans).